Consider the following 153-residue polypeptide: Aspartate carbamoyltransferase regulatory chain (153 aa).

Cys109, Cys114, Cys138, and Cys141 together coordinate Zn(2+).

This sequence belongs to the PyrI family. Contains catalytic and regulatory chains. Zn(2+) serves as cofactor.

Functionally, involved in allosteric regulation of aspartate carbamoyltransferase. The chain is Aspartate carbamoyltransferase regulatory chain from Salmonella newport (strain SL254).